The following is a 261-amino-acid chain: Shikimate dehydrogenase (NADP(+)) (261 aa).

Shikimate-binding positions include 13–15 and Thr60; that span reads SLS. Lys64 serves as the catalytic Proton acceptor. Glu76 contacts NADP(+). Shikimate is bound by residues Asn85 and Asp100. NADP(+)-binding positions include 122–126, 143–148, and Ile203; these read GAGGA and NRTVER. Tyr205 contacts shikimate. Residue Gly226 coordinates NADP(+).

This sequence belongs to the shikimate dehydrogenase family. In terms of assembly, homodimer.

The catalysed reaction is shikimate + NADP(+) = 3-dehydroshikimate + NADPH + H(+). It functions in the pathway metabolic intermediate biosynthesis; chorismate biosynthesis; chorismate from D-erythrose 4-phosphate and phosphoenolpyruvate: step 4/7. Functionally, involved in the biosynthesis of the chorismate, which leads to the biosynthesis of aromatic amino acids. Catalyzes the reversible NADPH linked reduction of 3-dehydroshikimate (DHSA) to yield shikimate (SA). This chain is Shikimate dehydrogenase (NADP(+)), found in Exiguobacterium sp. (strain ATCC BAA-1283 / AT1b).